We begin with the raw amino-acid sequence, 169 residues long: UPF0398 protein Spy49_1277c (169 aa).

Belongs to the UPF0398 family.

This chain is UPF0398 protein Spy49_1277c, found in Streptococcus pyogenes serotype M49 (strain NZ131).